The sequence spans 615 residues: Protein DlpA (615 aa).

The protein belongs to the isocitrate and isopropylmalate dehydrogenases family. To M.jannaschii MJ0644 in the C-terminal section.

The polypeptide is Protein DlpA (dlpA) (Legionella pneumophila subsp. pneumophila (strain Philadelphia 1 / ATCC 33152 / DSM 7513)).